We begin with the raw amino-acid sequence, 626 residues long: MAARPAATLAWSLLLLSSALLREGCRARFVAERDSEDDGEEPVVFPESPLQSPTVLVAVLARNAAHTLPHFLGCLERLDYPKSRMAIWAATDHNVDNTTEIFREWLKNVQRLYHYVEWRPMDEPESYPDEIGPKHWPTSRFAHVMKLRQAALRTAREKWSDYILFIDVDNFLTNPQTLNLLIAENKTIVAPMLESRGLYSNFWCGITPKGFYKRTPDYVQIREWKRTGCFPVPMVHSTFLIDLRKEASDKLTFYPPHQDYTWTFDDIIVFAFSSRQAGIQMYLCNREHYGYLPIPLKPHQTLQEDIENLIHVQIEAMIDRPPMEPSQYVSVVPKYPDKMGFDEIFMINLKRRKDRRDRMLRTLYEQEIEVKIVEAVDGKALNTSQLKALNIEMLPGYRDPYSSRPLTRGEIGCFLSHYSVWKEVIDRELEKTLVIEDDVRFEHQFKKKLMKLMDNIDQAQLDWELIYIGRKRMQVKEPEKAVPNVANLVEADYSYWTLGYVISLEGAQKLVGANPFGKMLPVDEFLPVMYNKHPVAEYKEYYESRDLKAFSAEPLLIYPTHYTGQPGYLSDTETSTIWDNETVATDWDRTHAWKSRKQSRIYSNAKNTEALPPPTSLDTVPSRDEL.

Positions 1–27 (MAARPAATLAWSLLLLSSALLREGCRA) are cleaved as a signal peptide. N-linked (GlcNAc...) asparagine glycosylation is found at N97, N185, N382, and N580. The interval 604-626 (NAKNTEALPPPTSLDTVPSRDEL) is disordered. The Prevents secretion from ER motif lies at 623–626 (RDEL).

This sequence belongs to the glycosyltransferase 25 family. As to expression, expressed in brain and skeletal muscle.

It localises to the endoplasmic reticulum lumen. The enzyme catalyses (5R)-5-hydroxy-L-lysyl-[collagen] + UDP-alpha-D-galactose = (5R)-5-O-(beta-D-galactosyl)-5-hydroxy-L-lysyl-[collagen] + UDP + H(+). Beta-galactosyltransferase that transfers beta-galactose to hydroxylysine residues of collagen. This Homo sapiens (Human) protein is Procollagen galactosyltransferase 2 (COLGALT2).